The sequence spans 365 residues: Chloroplast protein FOR GROWTH AND FERTILITY 1 (365 aa).

2 disordered regions span residues 1 to 30 and 62 to 90; these read MERL…LPRL and YTPI…PGFL. The N-terminal 79 residues, 1–79, are a transit peptide targeting the chloroplast; sequence MERLLQPSSS…TNNSFNGSPK (79 aa). Composition is skewed to low complexity over residues 7–24 and 62–77; these read PSSS…SRTS and YTPI…FNGS. Transmembrane regions (helical) follow at residues 109–129, 139–159, 182–202, 218–238, 274–294, 301–321, and 345–365; these read VILI…PPAF, GWLT…LSGP, ALWG…FLLL, IVGL…SEIP, GVVH…LALP, AFLI…TAFI, and LVAI…FSLY.

Mostly expressed in leaves and flowers, to a lower extent, in stems, roots, floral bud, inflorescence and siliques, and, barely, in seedlings.

The protein localises to the plastid. It localises to the chloroplast membrane. The protein resides in the plastid membrane. Functionally, together with CGF2, essential protein which supports female gametogenesis and embryogenesis, probably by securing local energy supply. The protein is Chloroplast protein FOR GROWTH AND FERTILITY 1 of Arabidopsis thaliana (Mouse-ear cress).